Reading from the N-terminus, the 294-residue chain is 33 kDa chaperonin (294 aa).

Disulfide bonds link C235–C237 and C268–C271.

The protein belongs to the HSP33 family. Post-translationally, under oxidizing conditions two disulfide bonds are formed involving the reactive cysteines. Under reducing conditions zinc is bound to the reactive cysteines and the protein is inactive.

Its subcellular location is the cytoplasm. In terms of biological role, redox regulated molecular chaperone. Protects both thermally unfolding and oxidatively damaged proteins from irreversible aggregation. Plays an important role in the bacterial defense system toward oxidative stress. The polypeptide is 33 kDa chaperonin (Proteus mirabilis (strain HI4320)).